The primary structure comprises 677 residues: DNA ligase (677 aa).

Residues 38–42 (DSVYD), 87–88 (SL), and Glu119 each bind NAD(+). Lys121 acts as the N6-AMP-lysine intermediate in catalysis. 4 residues coordinate NAD(+): Arg142, Glu179, Lys296, and Lys320. Residues Cys414, Cys417, Cys432, and Cys438 each coordinate Zn(2+). The BRCT domain occupies 595–677 (VVKSEIAGKT…LKLLKSKGVF (83 aa)).

Belongs to the NAD-dependent DNA ligase family. LigA subfamily. The cofactor is Mg(2+). Mn(2+) serves as cofactor.

The enzyme catalyses NAD(+) + (deoxyribonucleotide)n-3'-hydroxyl + 5'-phospho-(deoxyribonucleotide)m = (deoxyribonucleotide)n+m + AMP + beta-nicotinamide D-nucleotide.. Functionally, DNA ligase that catalyzes the formation of phosphodiester linkages between 5'-phosphoryl and 3'-hydroxyl groups in double-stranded DNA using NAD as a coenzyme and as the energy source for the reaction. It is essential for DNA replication and repair of damaged DNA. This Coxiella burnetii (strain CbuG_Q212) (Coxiella burnetii (strain Q212)) protein is DNA ligase.